Consider the following 1157-residue polypeptide: ATP-dependent helicase/deoxyribonuclease subunit B (1157 aa).

One can recognise a UvrD-like helicase ATP-binding domain in the interval 1-277 (MTLQIIAGKS…KLFLENKRAK (277 aa)). 8-15 (GKSGTGKT) serves as a coordination point for ATP. The UvrD-like helicase C-terminal domain maps to 272–578 (ENKRAKSDSL…EFSLLPPSLD (307 aa)). [4Fe-4S] cluster-binding residues include cysteine 794, cysteine 1115, cysteine 1118, and cysteine 1124.

Belongs to the helicase family. AddB/RexB type 1 subfamily. In terms of assembly, heterodimer of AddA and AddB. Mg(2+) is required as a cofactor. [4Fe-4S] cluster serves as cofactor.

The heterodimer acts as both an ATP-dependent DNA helicase and an ATP-dependent, dual-direction single-stranded exonuclease. Recognizes the chi site generating a DNA molecule suitable for the initiation of homologous recombination. The AddB subunit has 5' -&gt; 3' nuclease activity but not helicase activity. In Listeria welshimeri serovar 6b (strain ATCC 35897 / DSM 20650 / CCUG 15529 / CIP 8149 / NCTC 11857 / SLCC 5334 / V8), this protein is ATP-dependent helicase/deoxyribonuclease subunit B.